The following is a 437-amino-acid chain: Trigger factor (437 aa).

Positions 165–251 (GDLVVIDFKG…LHTIKEKEKI (87 aa)) constitute a PPIase FKBP-type domain.

Belongs to the FKBP-type PPIase family. Tig subfamily.

The protein localises to the cytoplasm. The catalysed reaction is [protein]-peptidylproline (omega=180) = [protein]-peptidylproline (omega=0). Functionally, involved in protein export. Acts as a chaperone by maintaining the newly synthesized protein in an open conformation. Functions as a peptidyl-prolyl cis-trans isomerase. The sequence is that of Trigger factor from Nitratiruptor sp. (strain SB155-2).